A 396-amino-acid chain; its full sequence is Aspartic protease 1 (396 aa).

Positions 1–15 (MQTFVLLALVAACSA) are cleaved as a signal peptide. Residues 68 to 389 (YLGNITLGTP…DIGNGQIGFA (322 aa)) form the Peptidase A1 domain. N-linked (GlcNAc...) asparagine glycosylation occurs at Asn-71. Residue Asp-86 is part of the active site. A disulfide bridge connects residues Cys-99 and Cys-104. Residue Asp-278 is part of the active site. Cys-313 and Cys-349 are oxidised to a cystine.

Belongs to the peptidase A1 family. As to quaternary structure, interacts with B.thuringiensis endotoxin Cry6Aa; the interaction prevents Cry6Aa proteolysis by host gut proteases.

It localises to the cytoplasm. It is found in the lysosome. The protein resides in the secreted. Functionally, aspartic protease, which is part of the necrosis cell death pathway. Promotes B.thuringiensis Cry6Aa stability by preventing its proteolysis by host gut proteases. Required for Cry6Aa-induced necrotic death of intestinal cells. Cry6Aa uptake into the host intestinal cells triggers an increase in intracellular Ca(2+) levels leading to lysosome rupture and to the subsequent release of asp-1 which leads to necrosis. In Caenorhabditis elegans, this protein is Aspartic protease 1.